The following is a 248-amino-acid chain: Ribosomal RNA small subunit methyltransferase J (248 aa).

S-adenosyl-L-methionine contacts are provided by residues 101–102 (RD), 117–118 (ER), 153–154 (SS), and D171.

It belongs to the methyltransferase superfamily. RsmJ family.

Its subcellular location is the cytoplasm. It catalyses the reaction guanosine(1516) in 16S rRNA + S-adenosyl-L-methionine = N(2)-methylguanosine(1516) in 16S rRNA + S-adenosyl-L-homocysteine + H(+). Its function is as follows. Specifically methylates the guanosine in position 1516 of 16S rRNA. The protein is Ribosomal RNA small subunit methyltransferase J of Proteus mirabilis (strain HI4320).